The following is a 590-amino-acid chain: MNIYKRLKQDIDVVATSIINKLKSTSDSKKFDSLNDTIPIVLESSKDVNSYDISTNIAMLIAKKMNQNSITLANLFKKKLSHYPYIANITIAGPGFINFVILQEAWTNYLAIILDGSYRKEYSSIGNNKKVNIEYVSANPTGPLHIGHARAAVYGDVLATLLQCTGYQVTREYYVNDTGVQIDNLSKSVYLRYKQAITGQAADIPKGLYPGEYLISVGTNLAEEYGDKLLTLSEPEYLNIIKDVAVNNLLQSIKADLALIGVRHDVFFSEKKLHDSNVISKVIDLLSVKKLVYTGKLSQPKGQSSDNWQPRSQLLFKSTIFGDDQDRPLQKEDGSWSYFASDIAYADNKIKRGFDYVIFILGADHIGYVSRIKAIIQALDSNQDVTLDIKICQLVKLIEDGVAVKMSKRSGSFTTIRDVYETVGKDVIRFFMLTRKNNAVLDFDLVKLQEQSRDNPVFYVQYAYVRAGSILRKAKDNANIAYEIFSTNKSDFSLLSTKEELNLIKILAVWSHMLDGAVKNFEPHRIAIYLQKLAAEFHALWNLKSRDLDYRFIVLNDNNLTAARLALATAVREIIREGLKIIGITCVEVM.

The 'HIGH' region signature appears at 138–148 (ANPTGPLHIGH).

The protein belongs to the class-I aminoacyl-tRNA synthetase family. In terms of assembly, monomer.

It localises to the cytoplasm. The enzyme catalyses tRNA(Arg) + L-arginine + ATP = L-arginyl-tRNA(Arg) + AMP + diphosphate. The protein is Arginine--tRNA ligase of Orientia tsutsugamushi (strain Ikeda) (Rickettsia tsutsugamushi).